The chain runs to 974 residues: Kinase-interacting protein 1 (974 aa).

The region spanning 10 to 90 is the NAB domain; the sequence is YSWWAASHIR…ERYDHLSKEL (81 aa). A disordered region spans residues 151 to 170; it reads STASKQKQGKQSSKIEDAAK. The stretch at 173-423 forms a coiled coil; it reads LSKNEAIEEI…DVVNQNSCLR (251 aa). Residues 586 to 614 are disordered; that stretch reads AQPTPAEKGDEKVSAQSGNTSVYETHTQK. Over residues 599-610 the composition is skewed to polar residues; that stretch reads SAQSGNTSVYET. Residues 641 to 697 adopt a coiled-coil conformation; that stretch reads NEYTAILKNYKEVTKKLSDIEKKDRDTEFELTLQTRELKSAIAKRDEEIHNLRQKLS. Residues 714–740 are disordered; sequence LLDPSDPSSARGLKPEDLPQIKDGDDE. Residues 726-736 show a composition bias toward basic and acidic residues; sequence LKPEDLPQIKD. Coiled coils occupy residues 784–807 and 882–905; these read HQIQ…RDKE and AAKF…ELEA.

Homodimer or homooligomer. Interacts with PRK1. Post-translationally, phosphorylated by PRK1. As to expression, expressed in mature pollen grains and pollen tubes, but not in style, ovary, petal, leaf, root or sepal.

It is found in the cytoplasm. Its function is as follows. Probably involved in the receptor-like kinase-mediated signal transduction pathway. The chain is Kinase-interacting protein 1 from Petunia integrifolia (Violet-flowered petunia).